Here is a 434-residue protein sequence, read N- to C-terminus: Nicotinate phosphoribosyltransferase (434 aa).

Position 242 is a phosphohistidine; by autocatalysis (histidine 242).

This sequence belongs to the NAPRTase family. Transiently phosphorylated on a His residue during the reaction cycle. Phosphorylation strongly increases the affinity for substrates and increases the rate of nicotinate D-ribonucleotide production. Dephosphorylation regenerates the low-affinity form of the enzyme, leading to product release.

The catalysed reaction is nicotinate + 5-phospho-alpha-D-ribose 1-diphosphate + ATP + H2O = nicotinate beta-D-ribonucleotide + ADP + phosphate + diphosphate. The protein operates within cofactor biosynthesis; NAD(+) biosynthesis; nicotinate D-ribonucleotide from nicotinate: step 1/1. In terms of biological role, catalyzes the synthesis of beta-nicotinate D-ribonucleotide from nicotinate and 5-phospho-D-ribose 1-phosphate at the expense of ATP. This is Nicotinate phosphoribosyltransferase from Brucella anthropi (strain ATCC 49188 / DSM 6882 / CCUG 24695 / JCM 21032 / LMG 3331 / NBRC 15819 / NCTC 12168 / Alc 37) (Ochrobactrum anthropi).